The sequence spans 533 residues: Probable bifunctional tRNA threonylcarbamoyladenosine biosynthesis protein (533 aa).

The tract at residues 1–329 (MTRVLGIEGT…FRPDEVPVSW (329 aa)) is kae1. Fe cation is bound by residues H113 and H117. L-threonylcarbamoyladenylate is bound by residues 134–138 (NASGA), D166, G179, E183, and N262. A Fe cation-binding site is contributed by D290. The Protein kinase domain occupies 338–533 (PVPTDERRQG…REIETRGRYQ (196 aa)). ATP-binding positions include 345-352 (RQGAEAVV) and K363. Residue D452 is the Proton acceptor; for kinase activity of the active site.

This sequence in the N-terminal section; belongs to the KAE1 / TsaD family. The protein in the C-terminal section; belongs to the protein kinase superfamily. Tyr protein kinase family. BUD32 subfamily. As to quaternary structure, component of the KEOPS complex that consists of Kae1, Bud32, Cgi121 and Pcc1; the whole complex dimerizes. It depends on Fe(2+) as a cofactor.

The protein resides in the cytoplasm. The catalysed reaction is L-seryl-[protein] + ATP = O-phospho-L-seryl-[protein] + ADP + H(+). The enzyme catalyses L-threonyl-[protein] + ATP = O-phospho-L-threonyl-[protein] + ADP + H(+). It catalyses the reaction L-threonylcarbamoyladenylate + adenosine(37) in tRNA = N(6)-L-threonylcarbamoyladenosine(37) in tRNA + AMP + H(+). Functionally, required for the formation of a threonylcarbamoyl group on adenosine at position 37 (t(6)A37) in tRNAs that read codons beginning with adenine. Is a component of the KEOPS complex that is probably involved in the transfer of the threonylcarbamoyl moiety of threonylcarbamoyl-AMP (TC-AMP) to the N6 group of A37. The Kae1 domain likely plays a direct catalytic role in this reaction. The Bud32 domain probably displays kinase activity that regulates Kae1 function. The protein is Probable bifunctional tRNA threonylcarbamoyladenosine biosynthesis protein of Natronomonas pharaonis (strain ATCC 35678 / DSM 2160 / CIP 103997 / JCM 8858 / NBRC 14720 / NCIMB 2260 / Gabara) (Halobacterium pharaonis).